Reading from the N-terminus, the 86-residue chain is Defensin-like SRCA-homolog protein (86 aa).

An N-terminal signal peptide occupies residues 1–26 (MRCVVLFMVSCLLIVLLINHFEEVEA). Intrachain disulfides connect Cys-32–Cys-84, Cys-42–Cys-70, Cys-52–Cys-79, and Cys-68–Cys-81.

This sequence belongs to the DEFL family.

Its subcellular location is the secreted. Involved in male-mediated self-incompatibility. This is Defensin-like SRCA-homolog protein (SCR37) from Arabidopsis lyrata (Lyre-leaved rock-cress).